The following is a 262-amino-acid chain: Small ribosomal subunit protein eS1 (262 aa).

The span at 1-18 (MAVGKNKRISKGKKGSKK) shows a compositional bias: basic residues. The segment at 1-20 (MAVGKNKRISKGKKGSKKKT) is disordered.

It belongs to the eukaryotic ribosomal protein eS1 family. In terms of assembly, component of the small ribosomal subunit. Mature ribosomes consist of a small (40S) and a large (60S) subunit. The 40S subunit contains about 33 different proteins and 1 molecule of RNA (18S). The 60S subunit contains about 49 different proteins and 3 molecules of RNA (25S, 5.8S and 5S).

The protein resides in the cytoplasm. The chain is Small ribosomal subunit protein eS1 from Oryza sativa subsp. japonica (Rice).